Consider the following 277-residue polypeptide: Release factor glutamine methyltransferase (277 aa).

S-adenosyl-L-methionine contacts are provided by residues 117 to 121 (GTGCG), aspartate 140, tryptophan 168, and asparagine 182. 182-185 (NPPY) serves as a coordination point for substrate.

Belongs to the protein N5-glutamine methyltransferase family. PrmC subfamily.

The enzyme catalyses L-glutaminyl-[peptide chain release factor] + S-adenosyl-L-methionine = N(5)-methyl-L-glutaminyl-[peptide chain release factor] + S-adenosyl-L-homocysteine + H(+). In terms of biological role, methylates the class 1 translation termination release factors RF1/PrfA and RF2/PrfB on the glutamine residue of the universally conserved GGQ motif. This chain is Release factor glutamine methyltransferase, found in Buchnera aphidicola subsp. Acyrthosiphon pisum (strain APS) (Acyrthosiphon pisum symbiotic bacterium).